The sequence spans 297 residues: Alpha/beta-gliadin A-IV (297 aa).

The first 20 residues, 1–20, serve as a signal peptide directing secretion; sequence MKTFLILALRAIVATTATIA. Residues 29-55 are compositionally biased toward low complexity; the sequence is QPQNPSQQQPQKQVPLVQQQQFPGQQQ. Disordered stretches follow at residues 29 to 127 and 234 to 257; these read QPQN…QQQQ and QYPS…SVQP. Over residues 56–67 the composition is skewed to pro residues; the sequence is PFPPQQPYPQQQ. A compositionally biased stretch (low complexity) spans 68–80; sequence PFPSQQPYMQLQP. Pro residues predominate over residues 81 to 101; that stretch reads FPQPQLPYPQPQLPYPQPQPF. Low complexity-rich tracts occupy residues 102–127 and 234–250; these read RPQQ…QQQQ and QYPS…QNPQ.

This sequence belongs to the gliadin/glutenin family. Substrate of transglutaminase.

Gliadin is the major seed storage protein in wheat. The protein is Alpha/beta-gliadin A-IV of Triticum aestivum (Wheat).